Consider the following 230-residue polypeptide: Phosducin-like protein 1 (230 aa).

Met-1 bears the N-acetylmethionine mark. A Phosducin domain is found at 16-166; the sequence is AEKDKHTTVD…VVGYKNGLEK (151 aa). Residues 25–79 are a coiled coil; the sequence is DSDDKSSGEENLDELLNELDRELDEDHEFLSAYRSERLQQISDHLKQVKKNVEDD. A thioredoxin fold region spans residues 81–230; that stretch reads YGRLQCIDNE…RSESDSDLDI (150 aa).

Belongs to the phosducin family. As to quaternary structure, interacts with the G protein beta-gamma subunit complex (STE4-STE18 complex).

It is found in the cytoplasm. Its function is as follows. Not essential for growth. Inhibits early G-protein signaling events following pheromone stimulation. May help create heterodimerizable beta-tubulin by facilitating the efficient transfer of nascent beta-tubulin polypeptides to the folding apparatus. This chain is Phosducin-like protein 1 (PLP1), found in Saccharomyces cerevisiae (strain ATCC 204508 / S288c) (Baker's yeast).